The chain runs to 339 residues: Anthranilate phosphoribosyltransferase (339 aa).

5-phospho-alpha-D-ribose 1-diphosphate-binding positions include glycine 80, 83-84 (GD), threonine 88, 90-93 (NIST), 108-116 (KHGNRSVSS), and serine 120. Glycine 80 contributes to the anthranilate binding site. Serine 92 provides a ligand contact to Mg(2+). Residue asparagine 111 coordinates anthranilate. Residue arginine 166 coordinates anthranilate. Mg(2+)-binding residues include aspartate 225 and glutamate 226.

Belongs to the anthranilate phosphoribosyltransferase family. In terms of assembly, homodimer. Mg(2+) serves as cofactor.

It catalyses the reaction N-(5-phospho-beta-D-ribosyl)anthranilate + diphosphate = 5-phospho-alpha-D-ribose 1-diphosphate + anthranilate. It functions in the pathway amino-acid biosynthesis; L-tryptophan biosynthesis; L-tryptophan from chorismate: step 2/5. Catalyzes the transfer of the phosphoribosyl group of 5-phosphorylribose-1-pyrophosphate (PRPP) to anthranilate to yield N-(5'-phosphoribosyl)-anthranilate (PRA). In Alkaliphilus metalliredigens (strain QYMF), this protein is Anthranilate phosphoribosyltransferase.